The primary structure comprises 1626 residues: DNA topoisomerase 2-beta (1626 aa).

Alanine 2 bears the N-acetylalanine mark. Lysine 3 bears the N6-acetyllysine mark. Glycyl lysine isopeptide (Lys-Gly) (interchain with G-Cter in SUMO2) cross-links involve residues glutamine 28, asparagine 29, lysine 33, and lysine 34. ATP is bound by residues asparagine 112, asparagine 141, and 169–171 (SSN). Glycyl lysine isopeptide (Lys-Gly) (interchain with G-Cter in SUMO2) cross-links involve residues lysine 177 and lysine 178. 182-189 (GRNGYGAK) is an ATP binding site. Residues lysine 228 and lysine 299 each participate in a glycyl lysine isopeptide (Lys-Gly) (interchain with G-Cter in SUMO2) cross-link. The interaction with DNA stretch occupies residues 363–365 (KKK). Glycyl lysine isopeptide (Lys-Gly) (interchain with G-Cter in SUMO2) cross-links involve residues lysine 367 and lysine 373. 397–399 (QTK) contacts ATP. Glycyl lysine isopeptide (Lys-Gly) (interchain with G-Cter in SUMO2) cross-links involve residues lysine 437, lysine 439, and lysine 446. One can recognise a Toprim domain in the interval 476–593 (CTLILTEGDS…SLLKHGFLEE (118 aa)). Positions 482, 562, and 564 each coordinate Mg(2+). Residues lysine 600, lysine 605, lysine 635, lysine 643, lysine 646, lysine 676, and lysine 712 each participate in a glycyl lysine isopeptide (Lys-Gly) (interchain with G-Cter in SUMO2) cross-link. One can recognise a Topo IIA-type catalytic domain in the interval 736 to 1189 (IPSLVDGFKP…SPSDLWKEDL (454 aa)). Tyrosine 826 functions as the O-(5'-phospho-DNA)-tyrosine intermediate in the catalytic mechanism. An interaction with DNA region spans residues 1011–1020 (KLQTTLTCNS). Positions 1034-1044 (ETVQDILKEFF) match the Nuclear export signal motif. Lysine 1092 is covalently cross-linked (Glycyl lysine isopeptide (Lys-Gly) (interchain with G-Cter in SUMO2)). The interval 1110–1140 (AWKEAQEKAAEEDETQNQHDDSSSDSGTPSG) is disordered. Glycyl lysine isopeptide (Lys-Gly) (interchain with G-Cter in SUMO2) cross-links involve residues lysine 1214, lysine 1217, lysine 1226, and lysine 1227. Serine 1236 carries the phosphoserine modification. Glycyl lysine isopeptide (Lys-Gly) (interchain with G-Cter in SUMO2) cross-links involve residues lysine 1250, lysine 1262, and lysine 1271. Positions 1274–1604 (FDEEFSGAPV…PSLPRTGRAR (331 aa)) are disordered. Residue threonine 1292 is modified to Phosphothreonine. Glycyl lysine isopeptide (Lys-Gly) (interchain with G-Cter in SUMO2) cross-links involve residues lysine 1323 and lysine 1327. Composition is skewed to basic and acidic residues over residues 1334–1344 (PWSDDESKSES) and 1358–1370 (SLLR…RPKY). Serine 1336, serine 1340, serine 1342, serine 1344, and serine 1358 each carry phosphoserine. Tyrosine 1370 is modified (phosphotyrosine). The span at 1374 to 1392 (FSEEEDDDADDDDDDNNDL) shows a compositional bias: acidic residues. Serine 1375 carries the phosphoserine modification. Lysine 1398 participates in a covalent cross-link: Glycyl lysine isopeptide (Lys-Gly) (interchain with G-Cter in SUMO2). Serine 1400 is subject to Phosphoserine. Phosphothreonine is present on threonine 1403. Residue serine 1413 is modified to Phosphoserine. Residue tyrosine 1421 is modified to Phosphotyrosine. The residue at position 1424 (serine 1424) is a Phosphoserine. Residues 1430 to 1442 (ATPEKSLHDKKSQ) are compositionally biased toward basic and acidic residues. Lysine 1440 is covalently cross-linked (Glycyl lysine isopeptide (Lys-Gly) (interchain with G-Cter in SUMO2)). Phosphoserine occurs at positions 1441, 1452, and 1454. Lysine 1456 participates in a covalent cross-link: Glycyl lysine isopeptide (Lys-Gly) (interchain with G-Cter in SUMO2). Residues 1456-1466 (KSEDDSAKFDS) are compositionally biased toward basic and acidic residues. 4 positions are modified to phosphoserine: serine 1461, serine 1466, serine 1473, and serine 1476. A Glycyl lysine isopeptide (Lys-Gly) (interchain with G-Cter in SUMO2) cross-link involves residue lysine 1490. The segment at 1506 to 1512 (KPKRAPK) is interaction with PLSCR1. Residues serine 1522, serine 1524, and serine 1526 each carry the phosphoserine modification. The span at 1539–1549 (GKGRGAKKRKA) shows a compositional bias: basic residues. Residues serine 1550 and serine 1552 each carry the phosphoserine modification. The span at 1563-1574 (KTSKTTSKKPKK) shows a compositional bias: basic residues. Position 1575 is a phosphothreonine (threonine 1575). 2 positions are modified to phosphoserine: serine 1576 and serine 1581. Threonine 1592 carries the post-translational modification Phosphothreonine. At serine 1596 the chain carries Phosphoserine. Tyrosine 1609 bears the Phosphotyrosine mark. Serine 1613 is subject to Phosphoserine.

This sequence belongs to the type II topoisomerase family. In terms of assembly, homodimer. Interacts with KIAA1210. Interacts with PLSCR1. Mg(2+) is required as a cofactor. Mn(2+) serves as cofactor. The cofactor is Ca(2+). Post-translationally, (Microbial infection) Deubiquitinated by Epstein-Barr virus BPLF1; leading to stabilized SUMOylated TOP2A trapped in cleavage complexes, which halts the DNA damage response to TOP2A-induced double-strand DNA breaks. SUMOylated. As to expression, expressed in the tonsil, spleen, lymph node, thymus, skin, pancreas, testis, colon, kidney, liver, brain and lung. Also found in breast, colon and lung carcinomas, Hodgkin's disease, large-cell non-Hodgkin's lymphoma, lymphocytic lymphomas and seminomas.

The protein resides in the nucleus. Its subcellular location is the nucleolus. It is found in the nucleoplasm. It carries out the reaction ATP-dependent breakage, passage and rejoining of double-stranded DNA.. Its function is as follows. Key decatenating enzyme that alters DNA topology by binding to two double-stranded DNA molecules, generating a double-stranded break in one of the strands, passing the intact strand through the broken strand, and religating the broken strand. Plays a role in B-cell differentiation. This chain is DNA topoisomerase 2-beta (TOP2B), found in Homo sapiens (Human).